Consider the following 1348-residue polypeptide: Putative late blight resistance protein homolog R1B-12 (1348 aa).

Coiled coils occupy residues 446–469 (RYSD…ESLQ) and 561–583 (PRMN…KLLN). In terms of domain architecture, NB-ARC spans 552–848 (RTSSQLTRTP…ISESFIKSCE (297 aa)). 595–602 (GMPGLGKT) is an ATP binding site. LRR repeat units follow at residues 977 to 1001 (FKFL…LLYL), 1051 to 1074 (LRHL…SAKL), 1123 to 1147 (PITL…ISAQ), 1151 to 1170 (YLKL…TADH), 1171 to 1194 (LKHL…EVSN), 1197 to 1219 (FPQL…ADDA), 1220 to 1244 (FPNL…FMDI), and 1309 to 1332 (LPGI…DMDA). The region spanning 1284-1348 (VKKMVLKFDT…VGKLINRGML (65 aa)) is the HMA domain.

Belongs to the disease resistance NB-LRR family.

The protein resides in the cytoplasm. It is found in the membrane. In terms of biological role, confers resistance to late blight (Phytophthora infestans) races carrying the avirulence gene Avr1. Resistance proteins guard the plant against pathogens that contain an appropriate avirulence protein via an indirect interaction with this avirulence protein. That triggers a defense system including the hypersensitive response, which restricts the pathogen growth. This chain is Putative late blight resistance protein homolog R1B-12 (R1B-12), found in Solanum demissum (Wild potato).